The following is a 413-amino-acid chain: Putative zinc finger protein B0310.2 (413 aa).

Disordered regions lie at residues 130–151 (PIFSSDDSVKGMPSRKRAKRSL) and 259–290 (VESDEGEIEVSPSPSTGDITENESSSSSTGPM). Polar residues predominate over residues 270 to 281 (PSPSTGDITENE). C2H2-type zinc fingers lie at residues 306–330 (FICMHNNCGKRFANKFLLKKHMFIH) and 336–358 (HTCPHCHKKFNRKDNLLRHKKTH).

Its subcellular location is the nucleus. The protein is Putative zinc finger protein B0310.2 of Caenorhabditis elegans.